A 2571-amino-acid polypeptide reads, in one-letter code: Highly reducing polyketide synthase 19 (2571 aa).

The disordered stretch occupies residues 1-51 (MSPIFLGDSEDAATCRCGPPSSPSPELSGTETALTSDSDGPELLNPGPQGP). Residues 27–38 (LSGTETALTSDS) are compositionally biased toward polar residues. One can recognise a Ketosynthase family 3 (KS3) domain in the interval 51–485 (PEPIAIIGMG…GANAHCILES (435 aa)). Catalysis depends on for beta-ketoacyl synthase activity residues Cys224, His359, and His398. Positions 609 to 932 (VFTGQGAQWA…PYNSALLRGK (324 aa)) are malonyl-CoA:ACP transacylase (MAT) domain. Catalysis depends on Ser701, which acts as the For malonyltransferase activity. The interval 1019-1163 (HDLLGSRVPG…GLVKLTQNED (145 aa)) is N-terminal hotdog fold. The segment at 1019-1340 (HDLLGSRVPG…SGCRMVPYSS (322 aa)) is dehydratase (DH) domain. Positions 1019–1344 (HDLLGSRVPG…MVPYSSGTAV (326 aa)) constitute a PKS/mFAS DH domain. His1051 functions as the Proton acceptor; for dehydratase activity in the catalytic mechanism. Positions 1177–1344 (MEQSAPRTWY…MVPYSSGTAV (168 aa)) are C-terminal hotdog fold. Asp1241 functions as the Proton donor; for dehydratase activity in the catalytic mechanism. Positions 1800–2140 (NMSDAFVFTR…AFRALSGSTT (341 aa)) are enoyl reductase (ER) domain. A ketoreductase (KR) domain region spans residues 2177–2355 (SYLLVGCLGG…ATSVGLGMIS (179 aa)). The Carrier domain maps to 2490 to 2568 (AVAAQALELV…MLSELIAGKL (79 aa)). Ser2527 is modified (O-(pantetheine 4'-phosphoryl)serine).

The protein operates within polyketide biosynthesis. Highly reducing polyketide synthase; part of the gene cluster that mediates the biosynthesis of pyriculol and pyriculariol, two heptaketides that induce lesion formation upon application on rice leaves but are dispensable for pathogenicity. The highly reducing polyketide synthase synthesizes the heptaketide backbone of pyriculol and pyriculariol. Pyriculol and pyriculariol contain several hydroxyl moieties and double bonds, so it can be assumed that several reduction steps occur during biosynthesis. These reactions could be executed by PKS19 itself or partly by the tailoring enzymes OXR1, PXR2, RED1, RED2 or RED3, identified within the cluster. The FAD-linked oxidoreductase OXR1 is the only tailoring enzyme for which the function has been determined yet, and is involved in the oxidation of dihydropyriculol and dihydropyriculariol into pyriculol and pyriculariol, respectively. This is Highly reducing polyketide synthase 19 from Pyricularia oryzae (strain 70-15 / ATCC MYA-4617 / FGSC 8958) (Rice blast fungus).